The sequence spans 80 residues: UPF0154 protein SH1564 (80 aa).

The chain crosses the membrane as a helical span at residues 4-24 (WLAILLIIVALIGGLVGGFFL).

This sequence belongs to the UPF0154 family.

The protein localises to the membrane. The polypeptide is UPF0154 protein SH1564 (Staphylococcus haemolyticus (strain JCSC1435)).